Here is a 236-residue protein sequence, read N- to C-terminus: Small ribosomal subunit protein uS2c (236 aa).

The protein belongs to the universal ribosomal protein uS2 family.

Its subcellular location is the plastid. The protein localises to the chloroplast. This chain is Small ribosomal subunit protein uS2c (rps2), found in Calycanthus floridus var. glaucus (Eastern sweetshrub).